Consider the following 140-residue polypeptide: Ribosomal RNA large subunit methyltransferase H (140 aa).

Residues Leu55 and Gly87 each coordinate S-adenosyl-L-methionine.

The protein belongs to the RNA methyltransferase RlmH family. As to quaternary structure, homodimer.

It is found in the cytoplasm. It carries out the reaction pseudouridine(1915) in 23S rRNA + S-adenosyl-L-methionine = N(3)-methylpseudouridine(1915) in 23S rRNA + S-adenosyl-L-homocysteine + H(+). Functionally, specifically methylates the pseudouridine at position 1915 (m3Psi1915) in 23S rRNA. The chain is Ribosomal RNA large subunit methyltransferase H from Erythrobacter litoralis (strain HTCC2594).